The following is a 233-amino-acid chain: Purine nucleoside phosphorylase DeoD-type (233 aa).

H4 provides a ligand contact to a purine D-ribonucleoside. Phosphate-binding positions include G20, R24, R43, and 87 to 90 (RIGT). Residues 179–181 (EME) and 203–204 (SD) contribute to the a purine D-ribonucleoside site. Residue D204 is the Proton donor of the active site.

Belongs to the PNP/UDP phosphorylase family. As to quaternary structure, homohexamer; trimer of homodimers.

It carries out the reaction a purine D-ribonucleoside + phosphate = a purine nucleobase + alpha-D-ribose 1-phosphate. It catalyses the reaction a purine 2'-deoxy-D-ribonucleoside + phosphate = a purine nucleobase + 2-deoxy-alpha-D-ribose 1-phosphate. Catalyzes the reversible phosphorolytic breakdown of the N-glycosidic bond in the beta-(deoxy)ribonucleoside molecules, with the formation of the corresponding free purine bases and pentose-1-phosphate. The protein is Purine nucleoside phosphorylase DeoD-type of Helicobacter pylori (strain ATCC 700392 / 26695) (Campylobacter pylori).